The following is a 305-amino-acid chain: UDP-3-O-acyl-N-acetylglucosamine deacetylase (305 aa).

Zn(2+)-binding residues include His-79, His-238, and Asp-242. The active-site Proton donor is the His-265.

Belongs to the LpxC family. Zn(2+) serves as cofactor.

It carries out the reaction a UDP-3-O-[(3R)-3-hydroxyacyl]-N-acetyl-alpha-D-glucosamine + H2O = a UDP-3-O-[(3R)-3-hydroxyacyl]-alpha-D-glucosamine + acetate. The protein operates within glycolipid biosynthesis; lipid IV(A) biosynthesis; lipid IV(A) from (3R)-3-hydroxytetradecanoyl-[acyl-carrier-protein] and UDP-N-acetyl-alpha-D-glucosamine: step 2/6. Functionally, catalyzes the hydrolysis of UDP-3-O-myristoyl-N-acetylglucosamine to form UDP-3-O-myristoylglucosamine and acetate, the committed step in lipid A biosynthesis. The polypeptide is UDP-3-O-acyl-N-acetylglucosamine deacetylase (Aliivibrio fischeri (strain ATCC 700601 / ES114) (Vibrio fischeri)).